The chain runs to 326 residues: Dipeptide transport ATP-binding protein DppD (326 aa).

Residues Ile5–Ile255 form the ABC transporter domain. Residues Ala44–Thr49, Asn61, and Gln97 each bind ATP. 4 residues coordinate [4Fe-4S] cluster: Cys285, Cys291, Cys298, and Cys316.

It belongs to the ABC transporter superfamily.

The protein resides in the cell membrane. The catalysed reaction is a dipeptide(out) + ATP + H2O = a dipeptide(in) + ADP + phosphate + H(+). Its activity is regulated as follows. The C-terminal iron-sulfur cluster may stabilize the structure of the C-terminal loops and may function in the regulation of the transport process. In terms of biological role, part of the ABC transporter Dpp involved in dipeptide transport. Responsible for energy coupling to the transport system. This chain is Dipeptide transport ATP-binding protein DppD, found in Caldanaerobacter subterraneus subsp. tengcongensis (strain DSM 15242 / JCM 11007 / NBRC 100824 / MB4) (Thermoanaerobacter tengcongensis).